The sequence spans 312 residues: Pectin lyase (312 aa).

Residue R201 is part of the active site. The interval 254 to 274 (GSGTFTDTNSVPPITNQKSPK) is disordered. Residues 256–274 (GTFTDTNSVPPITNQKSPK) show a composition bias toward polar residues.

It belongs to the polysaccharide lyase 1 family.

It catalyses the reaction Eliminative cleavage of (1-&gt;4)-alpha-D-galacturonan methyl ester to give oligosaccharides with 4-deoxy-6-O-methyl-alpha-D-galact-4-enuronosyl groups at their non-reducing ends.. The sequence is that of Pectin lyase (pnl) from Pseudomonas marginalis (Pseudomonas panacis).